The following is a 601-amino-acid chain: Glutathione-regulated potassium-efflux system protein KefB (601 aa).

The next 13 membrane-spanning stretches (helical) occupy residues 4–24 (ADLLTAGVLFLFAAVAAVPLA), 29–49 (IGAVLGYLLAGIAIGPWGLGF), 55–75 (EILHFSELGVVFLMFIIGLEL), 87–107 (IFGVGAAQVLLSAAVLAGLLM), 111–131 (FLWQAAVVGGIGLAMSSTAMA), 152–172 (VLLFQDLAVIPALALVPLLAG), 177–197 (HFDWFKVAMKVLAFAVMLIGG), 207–227 (FIAASGVREVFTAATLLLVLS), 230–250 (LFMDALGLSMALGTFIAGVLL), 262–282 (AIDPFKGLLLGLFFISVGMSL), 284–304 (LGVLYTHLLWVAASVVILVVI), 324–344 (MQFASVLSQGGEFAFVLFSTA), and 356–376 (ALLLVTVTLSMMTTPLLMKGI). Residues 400 to 519 (KPQVIVVGFG…AGVTQFSRET (120 aa)) enclose the RCK N-terminal domain.

The protein belongs to the monovalent cation:proton antiporter 2 (CPA2) transporter (TC 2.A.37) family. KefB subfamily. In terms of assembly, interacts with the regulatory subunit KefG.

The protein resides in the cell inner membrane. Its function is as follows. Pore-forming subunit of a potassium efflux system that confers protection against electrophiles. Catalyzes K(+)/H(+) antiport. In Salmonella paratyphi C (strain RKS4594), this protein is Glutathione-regulated potassium-efflux system protein KefB.